The following is a 336-amino-acid chain: Acetaldehyde dehydrogenase 1 (336 aa).

An NAD(+)-binding site is contributed by 32-35 (SGVV). The active-site Acyl-thioester intermediate is C150. Position 309 (N309) interacts with NAD(+).

The protein belongs to the acetaldehyde dehydrogenase family.

It catalyses the reaction acetaldehyde + NAD(+) + CoA = acetyl-CoA + NADH + H(+). In Mycobacterium ulcerans (strain Agy99), this protein is Acetaldehyde dehydrogenase 1 (mhpF).